Reading from the N-terminus, the 270-residue chain is Energy-coupling factor transporter transmembrane protein EcfT (270 aa).

Helical transmembrane passes span leucine 36–isoleucine 56, proline 72–asparagine 92, leucine 108–leucine 128, and phenylalanine 248–tryptophan 268.

This sequence belongs to the energy-coupling factor EcfT family. In terms of assembly, forms a stable energy-coupling factor (ECF) transporter complex composed of 2 membrane-embedded substrate-binding proteins (S component), 2 ATP-binding proteins (A component) and 2 transmembrane proteins (T component). May be able to interact with more than 1 S component at a time.

Its subcellular location is the cell membrane. Transmembrane (T) component of an energy-coupling factor (ECF) ABC-transporter complex. Unlike classic ABC transporters this ECF transporter provides the energy necessary to transport a number of different substrates. In Clostridium kluyveri (strain ATCC 8527 / DSM 555 / NBRC 12016 / NCIMB 10680 / K1), this protein is Energy-coupling factor transporter transmembrane protein EcfT.